The chain runs to 148 residues: 3-dehydroquinate dehydratase (148 aa).

The active-site Proton acceptor is tyrosine 23. Substrate-binding residues include asparagine 75, histidine 81, and aspartate 88. Catalysis depends on histidine 101, which acts as the Proton donor. Substrate-binding positions include 102-103 and arginine 112; that span reads LS.

Belongs to the type-II 3-dehydroquinase family. As to quaternary structure, homododecamer.

It carries out the reaction 3-dehydroquinate = 3-dehydroshikimate + H2O. Its pathway is metabolic intermediate biosynthesis; chorismate biosynthesis; chorismate from D-erythrose 4-phosphate and phosphoenolpyruvate: step 3/7. In terms of biological role, catalyzes a trans-dehydration via an enolate intermediate. The sequence is that of 3-dehydroquinate dehydratase from Ectopseudomonas mendocina (strain ymp) (Pseudomonas mendocina).